Here is a 180-residue protein sequence, read N- to C-terminus: ATP-dependent protease subunit HslV (180 aa).

The active site involves threonine 7. Residues glycine 165, cysteine 168, and threonine 171 each contribute to the Na(+) site.

This sequence belongs to the peptidase T1B family. HslV subfamily. As to quaternary structure, a double ring-shaped homohexamer of HslV is capped on each side by a ring-shaped HslU homohexamer. The assembly of the HslU/HslV complex is dependent on binding of ATP.

It is found in the cytoplasm. It catalyses the reaction ATP-dependent cleavage of peptide bonds with broad specificity.. With respect to regulation, allosterically activated by HslU binding. Its function is as follows. Protease subunit of a proteasome-like degradation complex believed to be a general protein degrading machinery. This is ATP-dependent protease subunit HslV from Bacillus cereus (strain ATCC 10987 / NRS 248).